Consider the following 255-residue polypeptide: Electron transfer flavoprotein subunit beta (255 aa).

An N-acetylalanine modification is found at A2. AMP contacts are provided by residues A9, 39–42, C66, and 123–134; these read NPFC and GKQAIDDDCNQT. Residues 183 to 205 form a recognition loop region; sequence ADLRLNEPRYATLPNIMKAKKKK. At K200 the chain carries N6,N6,N6-trimethyllysine; by ETFBKMT; alternate. At K200 the chain carries N6-acetyllysine; alternate. K200 carries the post-translational modification N6-methyllysine; alternate. K203 is subject to N6,N6,N6-trimethyllysine; by ETFBKMT. K210 is modified (N6-acetyllysine; alternate). N6-succinyllysine; alternate is present on K210. Residues S223 and S226 each carry the phosphoserine modification. Position 238 is an N6-acetyllysine (K238). Residue K248 is modified to N6-acetyllysine; alternate. Residue K248 is modified to N6-succinyllysine; alternate.

This sequence belongs to the ETF beta-subunit/FixA family. In terms of assembly, heterodimer composed of ETFA and ETFB. Identified in a complex that contains ETFA, ETFB and ETFRF1. Interacts with ACADM. In terms of processing, methylated. Trimethylation at Lys-200 and Lys-203 may negatively regulate the activity in electron transfer from acyl-CoA dehydrogenases.

Its subcellular location is the mitochondrion matrix. In terms of biological role, heterodimeric electron transfer flavoprotein that accepts electrons from several mitochondrial dehydrogenases, including acyl-CoA dehydrogenases, glutaryl-CoA and sarcosine dehydrogenase. It transfers the electrons to the main mitochondrial respiratory chain via ETF-ubiquinone oxidoreductase. Required for normal mitochondrial fatty acid oxidation and normal amino acid metabolism. ETFB binds an AMP molecule that probably has a purely structural role. The protein is Electron transfer flavoprotein subunit beta of Sus scrofa (Pig).